Here is a 525-residue protein sequence, read N- to C-terminus: Golgi resident protein GCP60 (525 aa).

N-acetylalanine is present on alanine 2. The tract at residues 12-68 (VSLDGLTLSPDSEERPGAEGAPPQTPPSSAPGNGLGSGASGQQREPGEAAAEGAAEE) is disordered. Serine 13 is subject to Phosphoserine. At threonine 18 the chain carries Phosphothreonine. Residues serine 20 and serine 40 each carry the phosphoserine modification. The span at 52 to 64 (GQQREPGEAAAEG) shows a compositional bias: low complexity. One can recognise an ACB domain in the interval 80–171 (LEELYGLALR…LNKCCPLLSA (92 aa)). A coiled-coil region spans residues 169–254 (LSAYVASHRI…AALNSQTAVQ (86 aa)). Positions 180–226 (KEEEEKRRKAEEERRQREEEERERLQKEEEKRKREKEDRLRREEEER) are disordered. The tract at residues 238–305 (QQKQQIMAAL…QQQAALQKQQ (68 aa)) is q domain; Interaction with PI4KB, TBC1D22A and TBC1D22B. Polar residues predominate over residues 319–336 (KVNTAGASDTLSVNGQAK). Positions 319–346 (KVNTAGASDTLSVNGQAKTHTENSEKVL) are disordered. The segment covering 337–346 (THTENSEKVL) has biased composition (basic and acidic residues). The region spanning 381–523 (KEKIRQDADS…SKSVYYRVYY (143 aa)) is the GOLD domain. Residues 448-470 (SDEEEEEEENVTCEEKAKKNANK) adopt a coiled-coil conformation.

As to quaternary structure, homodimer. Interacts with the C-terminal cytoplasmic domain of giantin/GOLGB1. Interacts with PBR and PKA regulatory subunit RI-alpha. Does not interact with PKA regulatory subunit RI-beta nor PKA regulatory subunit RII-alpha. Interacts (via Q domain) with PI4KB (via N-terminus). Interacts (via Q domain) with TBC1D22A and TBC1D22B; interactions with PI4KB and with TBC1D22A and TBC1D22B are mutually exclusive. Interacts with C10ORF76 and RAB11B. As to expression, expressed in brain (hippocampus, olfactory bulb, neuronal and glial cells of the cortex), eye, submaxillary gland, testis (interstitial and tubular compartments), ovary (granulosa cells, theca cells at late stages and primary follicles), adrenal gland (fasciculata and glomerulosa cells), heart, liver, and steroidogenic cell lines.

It localises to the golgi apparatus membrane. The protein resides in the mitochondrion. In terms of biological role, involved in the maintenance of Golgi structure by interacting with giantin, affecting protein transport between the endoplasmic reticulum and Golgi. Involved in hormone-induced steroid biosynthesis in testicular Leydig cells. Recruits PI4KB to the Golgi apparatus membrane; enhances the enzyme activity of PI4KB activity via its membrane recruitment thereby increasing the local concentration of the substrate in the vicinity of the kinase. This is Golgi resident protein GCP60 (Acbd3) from Mus musculus (Mouse).